The primary structure comprises 619 residues: Probable Xaa-Pro aminopeptidase P (619 aa).

4 residues coordinate Mn(2+): Asp415, Asp426, Glu524, and Glu538.

Belongs to the peptidase M24B family. It depends on Mn(2+) as a cofactor.

It carries out the reaction Release of any N-terminal amino acid, including proline, that is linked to proline, even from a dipeptide or tripeptide.. Its function is as follows. Catalyzes the removal of a penultimate prolyl residue from the N-termini of peptides. The polypeptide is Probable Xaa-Pro aminopeptidase P (AMPP) (Fusarium vanettenii (strain ATCC MYA-4622 / CBS 123669 / FGSC 9596 / NRRL 45880 / 77-13-4) (Fusarium solani subsp. pisi)).